Consider the following 581-residue polypeptide: MKSHIESLLEQTIESFKQQGIVPADFQARIQVDRTKDKSHGDLATNLAMMLTKVAKKNPRELAQLIIDTLPASSYVAKVEIAGPGFINFFIDDNALANQLQQALTSDHLGVALPTKQTIVVDYSSPNLAKEMHVGHLRSTIIGDSVVRALEYLGHNVIRQNHVGDWGTQFGMLLALMEELRAANGEQAKMELSDLESFYRAAKVRFDESTEFATRARQLVVALQSGDEYCNKLWREFNDISLSHCHDVYKRLGVSLTRADVHGESAYNADLAQVVKDLDAQGLLSESNGAKVVFQEAFRNKEGEPLPVIIQKADGGYLYATSDLAAMRYRSNVLKADRAMYFVDLRQALHFQQVFSLAKLAKFVRPEMSLEHTGFGTMNGEDGRPFKTRSGGVVKLVDLLDEADVRALELVRSKNPDMDEATLTEIARVVGISSVKYADLSKNRTSDYIFSFEQMLSFEGNTAPYLLYAYTRVAGIFKRATDIDLSQAKIVLEHEKEKDLGTKLAQFGEVLTRMTDKGLPHVLCGYLYELASEFSSFYEACPVLAAETEAQKQSRLLLAQLTAKTLKTGLSLLGIETLERM.

Residues 126 to 136 (PNLAKEMHVGH) carry the 'HIGH' region motif.

It belongs to the class-I aminoacyl-tRNA synthetase family. As to quaternary structure, monomer.

The protein resides in the cytoplasm. It catalyses the reaction tRNA(Arg) + L-arginine + ATP = L-arginyl-tRNA(Arg) + AMP + diphosphate. The sequence is that of Arginine--tRNA ligase from Shewanella frigidimarina (strain NCIMB 400).